We begin with the raw amino-acid sequence, 155 residues long: MKLQLCAVGRLRSGPERDLVEDYLGRFERTGRPLGLPAVQLLEVEDRKGGGMEAEADLLARAMAPGAVLAILDERGRTLSSPEFAEQLARWRDAGRDVALAIGGADGLAPRLRDRADLALSFGRMVWPHMLVRVMLAEQLYRAATILAGSPYHRV.

S-adenosyl-L-methionine contacts are provided by residues Ile71, Gly103, and 122–127 (FGRMVW).

The protein belongs to the RNA methyltransferase RlmH family. Homodimer.

It localises to the cytoplasm. The catalysed reaction is pseudouridine(1915) in 23S rRNA + S-adenosyl-L-methionine = N(3)-methylpseudouridine(1915) in 23S rRNA + S-adenosyl-L-homocysteine + H(+). Its function is as follows. Specifically methylates the pseudouridine at position 1915 (m3Psi1915) in 23S rRNA. The protein is Ribosomal RNA large subunit methyltransferase H of Cereibacter sphaeroides (strain ATCC 17025 / ATH 2.4.3) (Rhodobacter sphaeroides).